Here is a 1506-residue protein sequence, read N- to C-terminus: MAKQGSKEKKGYPELKEVIKATCKIRVGPGKETLTEGNCLWALKTIDFIFEDLKTEPWTITKMYTVWDRLKGLTPEETSKREFASLQATLACIMCSQMGMKPETVQAAKGIISMKEGLQENKEAKGEKVEQLYPNLEKHREVYPIVNLQAGGRSWKAVESVVFQQLQTVAMQHGLVSEDFERQLAYYATTWTSKDILEVLVMMPGNRAQKELIQGKLNEEAERWVRQNPPGPNVLTVDQIMGVGQTNQQASQANMDQARQICLQWVITALRSVRHMSHRPGNPMLVKQKNTESYEDFIARLLEAIDAEPVMDPIKTYLKVTLSYTNASTDCQKQMDRTLGTRVQQATVEEKMQACRDVGSEGFKMQLLAQALRPQGKAGHKGVNQKCYNCGKPGHLARQCRQGIICHHCGKRGHMQKDCRQKKQQGKQQEGATCGAVRAPYVVTEAPPKIEIKVGTRWKKLLVDTGADKTIVTSHDMSGIPKGRIILQGIGGIIEGEKWEQVHLQYKDKMIKGTIVVLATSPVEVLGRDNMRELGIGLIMANLEEKKIPSTRVRLKEGCKGPHIAQWPLTQEKLEGLKEIVDRLEKEGKVGRAPPHWTCNTPIFCIKKKSGKWRMLIDFRELNKQTEDLAEAQLGLPHPGGLQRKKHVTILDIGDAYFTIPLYEPYRQYTCFTMLSPNNLGPCVRYYWKVLPQGWKLSPAVYQFTMQKILRGWIEEHPMIQFGIYMDDIYIGSDLGLEEHRGIVNELASYIAQYGFMLPEDKRQEGYPAKWLGFELHPEKWKFQKHTLPEITEGPITLNKLQKLVGDLVWRQSLIGKSIPNILKLMEGDRALQSERYIESIHVREWEACRQKLKEMEGNYYDEEKDIYGQLDWGNKAIEYIVFQEKGKPLWVNVVHSIKNLSQAQQIIKAAQKLTQEVIIRTGKIPWILLPGREEDWILELQMGNINWMPSFWSCYKGSVRWKKRNVIAEVVPGPTYYTDGGKKNGRGSLGYIASTGEKFRIHEEGTNQQLELRAIEEACKQGPEKMNIVTDSRYAYEFMLRNWDEEVIRNPIQARIMELVHNKEKIGVHWVPGHKGIPQNEEIDRYISEIFLAKEGRGILQKRAEDAGYDLICPQEISIPAGQVKRIAIDLKINLKKDQWAMIGTKSSFANKGVFVQGGIIDSGYQGTIQVVIYNSNNKEVVIPQGRKFAQLILMPLIHEELKPWGETRKTERGEQGFGSTGMYWIENIPLAEEEHNKWHQDAVSLHLEFGIPRTAAEDIVQQCDVCQENKMPSTLRGSNKRGIDHWQVDYTHYEDKIILVWVETNSGLIYAERVKGETGQEFRVQTMKWYAMFAPKSLQSDNGPAFVAESTQLLMKYLGIEHTTGIPWNPQSQALVERTHQTLKNTLEKLIPMFNAFESALAGTLITLNIKRKGGLGTSPMDIFIFNKEQQRIQQQSKSKQEKIRFCYYRTRKRGHPGEWQGPTQVLWGGDGAIVVKDRGTDRYLVIANKDVKFIPPPKEIQKE.

CCHC-type zinc fingers lie at residues 385-402 (QKCYNCGKPGHLARQCRQ) and 404-421 (IICHHCGKRGHMQKDCRQ). One can recognise a Peptidase A2 domain in the interval 459–530 (KKLLVDTGAD…SPVEVLGRDN (72 aa)). The Protease; shared with dimeric partner role is filled by Asp464. The region spanning 587–776 (EGKVGRAPPH…YPAKWLGFEL (190 aa)) is the Reverse transcriptase domain. Positions 652, 727, 728, 980, 1012, 1032, and 1085 each coordinate Mg(2+). The region spanning 971–1093 (VVPGPTYYTD…IDRYISEIFL (123 aa)) is the RNase H type-1 domain. The Integrase-type zinc finger occupies 1228–1269 (ENIPLAEEEHNKWHQDAVSLHLEFGIPRTAAEDIVQQCDVCQ). Zn(2+) is bound by residues His1237, His1241, Cys1265, and Cys1268. Positions 1270 to 1430 (ENKMPSTLRG…SPMDIFIFNK (161 aa)) constitute an Integrase catalytic domain. Positions 1291, 1343, and 1379 each coordinate Mg(2+). The segment at residues 1447-1499 (RFCYYRTRKRGHPGEWQGPTQVLWGGDGAIVVKDRGTDRYLVIANKDVKFIPP) is a DNA-binding region (integrase-type).

It belongs to the retroviral Pol polyprotein family. As to quaternary structure, homotetramer; further associates as a homohexadecamer. Mg(2+) is required as a cofactor. Post-translationally, specific enzymatic cleavages by the viral protease yield mature proteins.

It is found in the virion. The catalysed reaction is Endonucleolytic cleavage to 5'-phosphomonoester.. The enzyme catalyses 3'-end directed exonucleolytic cleavage of viral RNA-DNA hybrid.. It catalyses the reaction dUTP + H2O = dUMP + diphosphate + H(+). It carries out the reaction DNA(n) + a 2'-deoxyribonucleoside 5'-triphosphate = DNA(n+1) + diphosphate. Its function is as follows. Mediates, with Gag polyprotein, the essential events in virion assembly, including binding the plasma membrane, making the protein-protein interactions necessary to create spherical particles, recruiting the viral Env proteins, and packaging the genomic RNA via direct interactions with the RNA packaging sequence. Targets the polyprotein to the plasma membrane. Functionally, forms the core that encapsulates the genomic RNA-nucleocapsid complex in the virion. In terms of biological role, encapsulates and protects viral dimeric unspliced genomic RNA (gRNA). Binds these RNAs through its zinc fingers. Acts as a nucleic acid chaperone which is involved in rearrangement of nucleic acid secondary structure during gRNA retrotranscription. Also facilitates template switch leading to recombination. Its function is as follows. The aspartyl protease mediates proteolytic cleavages of Gag and Gag-Pol polyproteins during or shortly after the release of the virion from the plasma membrane. Cleavages take place as an ordered, step-wise cascade to yield mature proteins. This process is called maturation. Displays maximal activity during the budding process just prior to particle release from the cell. RT is a multifunctional enzyme that converts the viral dimeric RNA genome into dsDNA in the cytoplasm, shortly after virus entry into the cell. This enzyme displays a DNA polymerase activity that can copy either DNA or RNA templates, and a ribonuclease H (RNase H) activity that cleaves the RNA strand of RNA-DNA heteroduplexes in a partially processive 3' to 5' endonucleasic mode. Conversion of viral genomic RNA into dsDNA requires many steps. A tRNA-Trp binds to the primer-binding site (PBS) situated at the 5' end of the viral RNA. RT uses the 3' end of the tRNA primer to perfom a short round of RNA-dependent minus-strand DNA synthesis. The reading proceeds through the U5 region and ends after the repeated (R) region which is present at both ends of viral RNA. The portion of the RNA-DNA heteroduplex is digested by the RNase H, resulting in a ssDNA product attached to the tRNA primer. This ssDNA/tRNA hybridizes with the identical R region situated at the 3' end of viral RNA. This template exchange, known as minus-strand DNA strong stop transfer, can be either intra- or intermolecular. RT uses the 3' end of this newly synthesized short ssDNA to perfom the RNA-dependent minus-strand DNA synthesis of the whole template. RNase H digests the RNA template except for a polypurine tract (PPT) situated at the 5' end of the genome. It is not clear if both polymerase and RNase H activities are simultaneous. RNase H probably can proceed both in a polymerase-dependent (RNA cut into small fragments by the same RT performing DNA synthesis) and a polymerase-independent mode (cleavage of remaining RNA fragments by free RTs). Secondly, RT performs DNA-directed plus-strand DNA synthesis using the PPT that has not been removed by RNase H as primers. PPT and tRNA primers are then removed by RNase H. The 3' and 5' ssDNA PBS regions hybridize to form a circular dsDNA intermediate. Strand displacement synthesis by RT to the PBS and PPT ends produces a blunt ended, linear dsDNA copy of the viral genome that includes long terminal repeats (LTRs) at both ends. Functionally, catalyzes viral DNA integration into the host chromosome, by performing a series of DNA cutting and joining reactions. This Ovis aries (Sheep) protein is Gag-Pol polyprotein (pol).